Consider the following 218-residue polypeptide: Cytochrome b6 (218 aa).

A helical membrane pass occupies residues 35-55; sequence IFYCLGGITLVCFLIQFATGF. Cys-38 contacts heme c. Positions 89 and 103 each coordinate heme b. Transmembrane regions (helical) follow at residues 93–113, 119–139, and 189–209; these read ASMM…TGGF, LTWV…VTGY, and LHTF…FLMI. His-190 and His-205 together coordinate heme b.

It belongs to the cytochrome b family. PetB subfamily. As to quaternary structure, the 4 large subunits of the cytochrome b6-f complex are cytochrome b6, subunit IV (17 kDa polypeptide, PetD), cytochrome f and the Rieske protein, while the 4 small subunits are PetG, PetL, PetM and PetN. The complex functions as a dimer. Heme b is required as a cofactor. It depends on heme c as a cofactor.

Its subcellular location is the cellular thylakoid membrane. Component of the cytochrome b6-f complex, which mediates electron transfer between photosystem II (PSII) and photosystem I (PSI), cyclic electron flow around PSI, and state transitions. This Prochlorococcus marinus (strain MIT 9211) protein is Cytochrome b6.